The chain runs to 270 residues: Phosphatidylglycerol--prolipoprotein diacylglyceryl transferase (270 aa).

3 helical membrane passes run 17–37 (LAIH…MFLG), 63–83 (ILFL…CLFY), and 95–115 (IFYI…VIAS). Arg146 contacts a 1,2-diacyl-sn-glycero-3-phospho-(1'-sn-glycerol). 3 helical membrane passes run 182–202 (SQVY…WLYA), 209–229 (GEVA…AEYF), and 243–263 (MSMG…LWVW).

The protein belongs to the Lgt family.

The protein resides in the cell inner membrane. It catalyses the reaction L-cysteinyl-[prolipoprotein] + a 1,2-diacyl-sn-glycero-3-phospho-(1'-sn-glycerol) = an S-1,2-diacyl-sn-glyceryl-L-cysteinyl-[prolipoprotein] + sn-glycerol 1-phosphate + H(+). It functions in the pathway protein modification; lipoprotein biosynthesis (diacylglyceryl transfer). Catalyzes the transfer of the diacylglyceryl group from phosphatidylglycerol to the sulfhydryl group of the N-terminal cysteine of a prolipoprotein, the first step in the formation of mature lipoproteins. The sequence is that of Phosphatidylglycerol--prolipoprotein diacylglyceryl transferase from Paracidovorax citrulli (strain AAC00-1) (Acidovorax citrulli).